Consider the following 549-residue polypeptide: tRNA pseudouridine synthase 1 (549 aa).

The segment covering 1-13 has biased composition (low complexity); the sequence is MEEVAPEQVQEVQ. The disordered stretch occupies residues 1-83; it reads MEEVAPEQVQ…NGNPIPREPR (83 aa). Over residues 53-73 the composition is skewed to basic and acidic residues; sequence PAEKKQKTDQRQIIREPKLDD. Asp-146 functions as the Nucleophile in the catalytic mechanism. The tract at residues 507 to 549 is disordered; the sequence is PGIDYGKNEKEDSNKESSNDQVNKESAPATSKPAEAVEQTEKN. Positions 512 to 524 are enriched in basic and acidic residues; it reads GKNEKEDSNKESS.

Belongs to the tRNA pseudouridine synthase TruA family. Zn(2+) is required as a cofactor.

It localises to the nucleus. It carries out the reaction a uridine in tRNA = a pseudouridine in tRNA. The enzyme catalyses uridine in snRNA = pseudouridine in snRNA. The catalysed reaction is a uridine in mRNA = a pseudouridine in mRNA. Formation of pseudouridine at positions 27 and 28 in the anticodon stem and loop of transfer RNAs; at positions 34 and 36 of intron-containing precursor tRNA(Ile) and at position 35 in the intron-containing tRNA(Tyr). Catalyzes pseudouridylation at position 44 in U2 snRNA. Also catalyzes pseudouridylation of mRNAs. The chain is tRNA pseudouridine synthase 1 (PUS1) from Candida glabrata (strain ATCC 2001 / BCRC 20586 / JCM 3761 / NBRC 0622 / NRRL Y-65 / CBS 138) (Yeast).